A 130-amino-acid chain; its full sequence is Small ribosomal subunit protein uS9 (130 aa).

The protein belongs to the universal ribosomal protein uS9 family.

The sequence is that of Small ribosomal subunit protein uS9 from Stenotrophomonas maltophilia (strain R551-3).